We begin with the raw amino-acid sequence, 680 residues long: Heterokaryon incompatibility protein 6, OR allele (680 aa).

Involved in the non-self-recognition during asexual growth of N.crassa. This process involves restriction of heterokaryon formation via genetic differences at 11 het loci, including mating type. This chain is Heterokaryon incompatibility protein 6, OR allele (het-6), found in Neurospora crassa (strain ATCC 24698 / 74-OR23-1A / CBS 708.71 / DSM 1257 / FGSC 987).